The primary structure comprises 368 residues: Trans-enoyl reductase TwmE (368 aa).

49–52 (SDYK) is an NADP(+) binding site. Residue 135-142 (FKAATLGT) coordinates substrate. Residues 204-207 (SPRS), Y222, and 269-270 (LE) contribute to the NADP(+) site. Residue 290–294 (SAELY) coordinates substrate. An NADP(+)-binding site is contributed by 360–361 (HP).

Belongs to the zinc-containing alcohol dehydrogenase family. As to quaternary structure, monomer.

It functions in the pathway secondary metabolite biosynthesis. Functionally, trans-enoyl reductase; part of the gene cluster that mediates the biosynthesis of wortmanamides A and B, reduced long-chain polyketides amidated with a specific omega-amino acid, 5-aminopentanoic acid (5PA). The PKS modules of TwmB are involved in the synthesis of the polyketide backbone, whereas the non-canonical C domain of TwmB is a bonafide condensation domain that specifically selects 5PA and catalyzes amidation to release polyketide chain. The C domain clearly prefers C16 and C18 fatty acyl substrates, which is consistent with simultaneous formation of both octaketide and nonaketide acyl amides wortmanamides A and B. Because TwmB lacks a designated enoylreductase (ER) domain, the required activity is provided the enoyl reductase TwmE. The roles of the remaining enzymes have still to be clarified. The chain is Trans-enoyl reductase TwmE from Talaromyces wortmannii (Penicillium wortmannii).